Consider the following 770-residue polypeptide: Integrin beta-2 (770 aa).

The N-terminal stretch at 1 to 22 (MLPQRPQLLLLAGLLSLQSVLS) is a signal peptide. Position 23 is a pyrrolidone carboxylic acid (Q23). The Extracellular segment spans residues 23-701 (QECTKYKVST…DMLECVKGPN (679 aa)). The region spanning 24–74 (ECTKYKVSTCRDCIESGPSCAWCQKLNFTGQGEPDSTRCDTRAQLLSKGCP) is the PSI domain. Cystine bridges form between C25-C43, C33-C447, C36-C62, C46-C73, C191-C198, C246-C286, C386-C400, C420-C445, C449-C467, C459-C470, C472-C481, C483-C514, C497-C512, C506-C517, C519-C534, C536-C559, C541-C557, C549-C562, C564-C573, C575-C598, C582-C596, C590-C601, C603-C612, C615-C618, C622-C663, C628-C647, C631-C643, and C671-C696. Residues N50 and N116 are each glycosylated (N-linked (GlcNAc...) asparagine). The VWFA domain occupies 124 to 363 (GYPIDLYYLM…ELIKSAYNKL (240 aa)). Mg(2+) is bound by residues S136 and S138. Residues S138, D141, D142, and D173 each coordinate Ca(2+). Residues N229, D231, P233, and E234 each contribute to the Ca(2+) site. Residue E234 participates in Mg(2+) binding. N-linked (GlcNAc...) asparagine glycosylation occurs at N254. Residues D264 and E347 each contribute to the Ca(2+) site. Residues 397–399 (RGD) carry the Cell attachment site motif. I-EGF domains are found at residues 449–482 (CREA…KNCE), 483–535 (CQTH…QFCE), 536–574 (CDNV…SACQ), and 575–613 (CLKS…PLCI). N501 carries N-linked (GlcNAc...) asparagine glycosylation. N642 carries an N-linked (GlcNAc...) asparagine glycan. The helical transmembrane segment at 702–724 (IAAIVGGTVGGVVLVGILLLAIW) threads the bilayer. Residues 725-770 (KALTHLSDLREYHRFEKEKLKSQWNNDNPLFKSATTTVMNPKFAES) are Cytoplasmic-facing. S746 and S757 each carry phosphoserine. Phosphothreonine occurs at positions 759 and 761.

The protein belongs to the integrin beta chain family. Heterodimer of an alpha and a beta subunit. The ITGB2 beta subunit associates with the ITGAL, ITGAM, ITGAX or ITGAD alpha subunits. Found in a complex with CD177 and ITGAM/CD11b. Interacts with FGR. Interacts with COPS5 and RANBP9. Interacts with FLNA (via filamin repeats 4, 9, 12, 17, 19, 21, and 23). Interacts with THBD. In terms of processing, both Ser-746 and Ser-757 become phosphorylated when T-cells are exposed to phorbol esters. Phosphorylation on Thr-759 (but not on Ser-757) allows interaction with 14-3-3 proteins.

It is found in the cell membrane. The protein resides in the membrane raft. In terms of biological role, integrin ITGAL/ITGB2 is a receptor for ICAM1, ICAM2, ICAM3 and ICAM4. Integrin ITGAL/ITGB2 is also a receptor for the secreted form of ubiquitin-like protein ISG15; the interaction is mediated by ITGAL. Integrins ITGAM/ITGB2 and ITGAX/ITGB2 are receptors for the iC3b fragment of the third complement component and for fibrinogen. Integrin ITGAX/ITGB2 recognizes the sequence G-P-R in fibrinogen alpha-chain. Integrin ITGAM/ITGB2 recognizes P1 and P2 peptides of fibrinogen gamma chain. Integrin ITGAM/ITGB2 is also a receptor for factor X. Integrin ITGAD/ITGB2 is a receptor for ICAM3 and VCAM1. Contributes to natural killer cell cytotoxicity. Involved in leukocyte adhesion and transmigration of leukocytes including T-cells and neutrophils. Triggers neutrophil transmigration during lung injury through PTK2B/PYK2-mediated activation. Integrin ITGAL/ITGB2 in association with ICAM3, contributes to apoptotic neutrophil phagocytosis by macrophages. In association with alpha subunit ITGAM/CD11b, required for CD177-PRTN3-mediated activation of TNF primed neutrophils. The polypeptide is Integrin beta-2 (ITGB2) (Ovis canadensis (Bighorn sheep)).